A 540-amino-acid polypeptide reads, in one-letter code: Transcription termination/antitermination protein NusA (540 aa).

An S1 motif domain is found at 144 to 214 (GQVIEARVED…SMWPITLSRS (71 aa)). Positions 319–386 (DTSIEIVVPA…QGIFGIKKRR (68 aa)) constitute a KH domain. The interval 457-540 (VAAPTPTPAP…KQTFDNFDDL (84 aa)) is disordered. Residues 461–489 (TPTPAPQPTPAPTKVEPVPPPVSVTPKPI) show a composition bias toward pro residues. The segment covering 512–522 (DDSKTKPEKSS) has biased composition (basic and acidic residues). A compositionally biased stretch (polar residues) spans 523–540 (AKTNTPQTKQTFDNFDDL).

This sequence belongs to the NusA family. Monomer. Binds directly to the core enzyme of the DNA-dependent RNA polymerase and to nascent RNA.

Its subcellular location is the cytoplasm. Functionally, participates in both transcription termination and antitermination. This Mycoplasma pneumoniae (strain ATCC 29342 / M129 / Subtype 1) (Mycoplasmoides pneumoniae) protein is Transcription termination/antitermination protein NusA.